A 252-amino-acid polypeptide reads, in one-letter code: Chitooligosaccharide deacetylase (252 aa).

Positions 61 and 125 each coordinate Mg(2+).

Belongs to the YdjC deacetylase family. ChbG subfamily. As to quaternary structure, homodimer. Mg(2+) is required as a cofactor.

It is found in the cytoplasm. The enzyme catalyses N,N'-diacetylchitobiose + H2O = N-acetyl-beta-D-glucosaminyl-(1-&gt;4)-D-glucosamine + acetate. It carries out the reaction diacetylchitobiose-6'-phosphate + H2O = N'-monoacetylchitobiose-6'-phosphate + acetate. It functions in the pathway glycan degradation; chitin degradation. Its function is as follows. Involved in the degradation of chitin. ChbG is essential for growth on the acetylated chitooligosaccharides chitobiose and chitotriose but is dispensable for growth on cellobiose and chitosan dimer, the deacetylated form of chitobiose. Deacetylation of chitobiose-6-P and chitotriose-6-P is necessary for both the activation of the chb promoter by the regulatory protein ChbR and the hydrolysis of phosphorylated beta-glucosides by the phospho-beta-glucosidase ChbF. Catalyzes the removal of only one acetyl group from chitobiose-6-P to yield monoacetylchitobiose-6-P, the inducer of ChbR and the substrate of ChbF. The polypeptide is Chitooligosaccharide deacetylase (Salmonella typhi).